The sequence spans 148 residues: Ribonuclease P protein component (148 aa).

The disordered stretch occupies residues 119-148; the sequence is PLPAAPGTMPPARAPRPSSLSPTEPDPRSD.

This sequence belongs to the RnpA family. Consists of a catalytic RNA component (M1 or rnpB) and a protein subunit.

It catalyses the reaction Endonucleolytic cleavage of RNA, removing 5'-extranucleotides from tRNA precursor.. Its function is as follows. RNaseP catalyzes the removal of the 5'-leader sequence from pre-tRNA to produce the mature 5'-terminus. It can also cleave other RNA substrates such as 4.5S RNA. The protein component plays an auxiliary but essential role in vivo by binding to the 5'-leader sequence and broadening the substrate specificity of the ribozyme. The sequence is that of Ribonuclease P protein component from Xanthomonas campestris pv. campestris (strain 8004).